Reading from the N-terminus, the 435-residue chain is ATP-dependent protease ATPase subunit HslU (435 aa).

ATP contacts are provided by residues isoleucine 18, glycine 60–glutamate 65, aspartate 248, glutamate 313, and arginine 385.

Belongs to the ClpX chaperone family. HslU subfamily. In terms of assembly, a double ring-shaped homohexamer of HslV is capped on each side by a ring-shaped HslU homohexamer. The assembly of the HslU/HslV complex is dependent on binding of ATP.

The protein localises to the cytoplasm. In terms of biological role, ATPase subunit of a proteasome-like degradation complex; this subunit has chaperone activity. The binding of ATP and its subsequent hydrolysis by HslU are essential for unfolding of protein substrates subsequently hydrolyzed by HslV. HslU recognizes the N-terminal part of its protein substrates and unfolds these before they are guided to HslV for hydrolysis. The polypeptide is ATP-dependent protease ATPase subunit HslU (Sinorhizobium medicae (strain WSM419) (Ensifer medicae)).